The chain runs to 213 residues: Outer-membrane lipoprotein LolB (213 aa).

The N-terminal stretch at methionine 1–alanine 24 is a signal peptide. The N-palmitoyl cysteine moiety is linked to residue cysteine 25. Cysteine 25 carries S-diacylglycerol cysteine lipidation.

The protein belongs to the LolB family. Monomer.

It localises to the cell outer membrane. In terms of biological role, plays a critical role in the incorporation of lipoproteins in the outer membrane after they are released by the LolA protein. This chain is Outer-membrane lipoprotein LolB, found in Shewanella woodyi (strain ATCC 51908 / MS32).